We begin with the raw amino-acid sequence, 1062 residues long: Carbamoyl phosphate synthase pyrimidine-specific large chain (1062 aa).

The segment at 1–401 (MGKREDIKKI…SLLKAVRSLE (401 aa)) is carboxyphosphate synthetic domain. Arg129, Arg169, Gly175, Gly176, Lys208, Ile210, Glu215, Gly241, Val242, His243, Gln284, and Glu298 together coordinate ATP. Residues 133-327 (RALMKELNEP…IAKIAAKIAV (195 aa)) enclose the ATP-grasp 1 domain. Mg(2+)-binding residues include Gln284, Glu298, and Asn300. Residues Gln284, Glu298, and Asn300 each coordinate Mn(2+). The interval 402 to 546 (AGVYHLDQPD…YGTYEEENES (145 aa)) is oligomerization domain. The carbamoyl phosphate synthetic domain stretch occupies residues 547 to 929 (ERTDKKSILV…ALYKGLIASG (383 aa)). Residues 671–861 (EQTLVELNIP…MANVATKVML (191 aa)) form the ATP-grasp 2 domain. 10 residues coordinate ATP: Arg707, Arg746, Leu748, Glu752, Gly777, Val778, His779, Ser780, Gln820, and Glu832. Mg(2+) contacts are provided by Gln820, Glu832, and Asn834. 3 residues coordinate Mn(2+): Gln820, Glu832, and Asn834. An MGS-like domain is found at 930-1062 (MSIPTHGSVL…FSAESMPVMQ (133 aa)). Residues 930–1062 (MSIPTHGSVL…FSAESMPVMQ (133 aa)) form an allosteric domain region.

This sequence belongs to the CarB family. As to quaternary structure, composed of two chains; the small (or glutamine) chain promotes the hydrolysis of glutamine to ammonia, which is used by the large (or ammonia) chain to synthesize carbamoyl phosphate. Tetramer of heterodimers (alpha,beta)4. Requires Mg(2+) as cofactor. Mn(2+) serves as cofactor.

The catalysed reaction is hydrogencarbonate + L-glutamine + 2 ATP + H2O = carbamoyl phosphate + L-glutamate + 2 ADP + phosphate + 2 H(+). It catalyses the reaction hydrogencarbonate + NH4(+) + 2 ATP = carbamoyl phosphate + 2 ADP + phosphate + 2 H(+). Its pathway is amino-acid biosynthesis; L-arginine biosynthesis; carbamoyl phosphate from bicarbonate: step 1/1. It functions in the pathway pyrimidine metabolism; UMP biosynthesis via de novo pathway; (S)-dihydroorotate from bicarbonate: step 1/3. Small subunit of the glutamine-dependent carbamoyl phosphate synthetase (CPSase). CPSase catalyzes the formation of carbamoyl phosphate from the ammonia moiety of glutamine, carbonate, and phosphate donated by ATP, constituting the first step of the biosynthetic pathway leading to pyrimidine nucleotides. The large subunit (synthetase) binds the substrates ammonia (free or transferred from glutamine from the small subunit), hydrogencarbonate and ATP and carries out an ATP-coupled ligase reaction, activating hydrogencarbonate by forming carboxy phosphate which reacts with ammonia to form carbamoyl phosphate. The polypeptide is Carbamoyl phosphate synthase pyrimidine-specific large chain (pyrAB) (Halalkalibacterium halodurans (strain ATCC BAA-125 / DSM 18197 / FERM 7344 / JCM 9153 / C-125) (Bacillus halodurans)).